A 792-amino-acid polypeptide reads, in one-letter code: Kinesin-related protein 2 (792 aa).

Disordered stretches follow at residues 22-50 and 162-183; these read TINS…PPST and NNIN…SPVQ. The segment covering 34–50 has biased composition (polar residues); it reads ASSSSQSNDRISYPPST. Residues 284–423 adopt a coiled-coil conformation; sequence RLSLSIQDIK…LEKSRSDEKV (140 aa). One can recognise a Kinesin motor domain in the interval 437-781; the sequence is NIRVFCRIRP…LRFAAKVNSC (345 aa). 528-535 contacts ATP; it reads GQTGSGKT.

This sequence belongs to the TRAFAC class myosin-kinesin ATPase superfamily. Kinesin family. NCD subfamily.

It is found in the nucleus. The protein localises to the cytoplasm. It localises to the cytoskeleton. The protein resides in the spindle. In terms of biological role, microtubule-dependent motor that is probably involved in microtubule organization in the mitotic spindle. This Dictyostelium discoideum (Social amoeba) protein is Kinesin-related protein 2 (kif2).